The primary structure comprises 677 residues: Protein hook (677 aa).

A Calponin-homology (CH) domain is found at 6–123; that stretch reads NEMYYSLLEW…RLLQLVLGCA (118 aa). 2 coiled-coil regions span residues 135-436 and 478-588; these read EIMC…KCGH and QTAL…AKEV.

This sequence belongs to the hook family. As to quaternary structure, homodimer. Interacts with microtubules via its N-terminus.

It localises to the cytoplasm. The protein localises to the cytoskeleton. The protein resides in the endosome. Its subcellular location is the synapse. Involved in endocytic trafficking by stabilizing organelles of the endocytic pathway. Probably acts as a cytoskeletal linker protein required to tether endosome vesicles to the cytoskeleton. Involved in modulation of endocytosis at stages required for down-regulation of membrane proteins that control synapse size. Not involved in synaptic vesicle recycling. Required in R7 cells for boss endocytosis into multivesicular bodies (MVBs). Has a role in regulating adult longevity. This is Protein hook from Drosophila persimilis (Fruit fly).